The following is a 175-amino-acid chain: Protein LHCP TRANSLOCATION DEFECT (175 aa).

A chloroplast-targeting transit peptide spans 1 to 68; the sequence is MASSSISFSC…WFKFGKNGVD (68 aa). An ANK repeat occupies 117 to 149; it reads PVDILLMLAATEGDRPKIEELLKAGADYSVKDA.

Interacts with CAO/cpSRP43, but is not a component of the transit complex. Interacts with LHCP (via T14 domain), TIC40 and TIC110. Highly expressed in leaves and seedlings. Detected in roots, but not in germinating seeds.

Its subcellular location is the plastid. It is found in the chloroplast thylakoid membrane. The protein localises to the chloroplast envelope. It localises to the chloroplast stroma. In terms of biological role, involved in the import of light-harvesting complex proteins (LHCP) and subsequent routing of these proteins to the chloroplast signal recognition particle (SRP) pathway. This is Protein LHCP TRANSLOCATION DEFECT (LTD) from Arabidopsis thaliana (Mouse-ear cress).